Consider the following 300-residue polypeptide: Protoheme IX farnesyltransferase (300 aa).

The next 9 membrane-spanning stretches (helical) occupy residues 24–44, 46–66, 94–114, 118–138, 146–166, 172–192, 217–237, 239–259, and 278–298; these read VTQLAVFCAVIGMFLATPGMV, WHVLIGGTVGIWLLAGAAFAI, PQILLFSAVLGSVGAWTLYTF, LTMWLTIATFVGYAVIYTLLL, IVIGGASGAMPPALGWAAVTG, AWILVLIIFVWTPPHFWVLAL, LHILLYTVILFAVTLMPFISG, SGAVYLTSAVLLGAVFLAYAW, and IVYLSLLFAALLVDHYARPLL.

The protein belongs to the UbiA prenyltransferase family. Protoheme IX farnesyltransferase subfamily.

It is found in the cell inner membrane. The catalysed reaction is heme b + (2E,6E)-farnesyl diphosphate + H2O = Fe(II)-heme o + diphosphate. The protein operates within porphyrin-containing compound metabolism; heme O biosynthesis; heme O from protoheme: step 1/1. Converts heme B (protoheme IX) to heme O by substitution of the vinyl group on carbon 2 of heme B porphyrin ring with a hydroxyethyl farnesyl side group. The polypeptide is Protoheme IX farnesyltransferase (Burkholderia cenocepacia (strain HI2424)).